Consider the following 673-residue polypeptide: Elongation factor G 1 (673 aa).

The region spanning 3-277 is the tr-type G domain; the sequence is KELRNIGIIA…SIVDYLPSPL (275 aa). GTP-binding positions include 12–19, 76–80, and 130–133; these read AHIDAGKT, DTPGH, and NKMD.

It belongs to the TRAFAC class translation factor GTPase superfamily. Classic translation factor GTPase family. EF-G/EF-2 subfamily.

Its subcellular location is the cytoplasm. Its function is as follows. Catalyzes the GTP-dependent ribosomal translocation step during translation elongation. During this step, the ribosome changes from the pre-translocational (PRE) to the post-translocational (POST) state as the newly formed A-site-bound peptidyl-tRNA and P-site-bound deacylated tRNA move to the P and E sites, respectively. Catalyzes the coordinated movement of the two tRNA molecules, the mRNA and conformational changes in the ribosome. This is Elongation factor G 1 from Syntrophomonas wolfei subsp. wolfei (strain DSM 2245B / Goettingen).